The following is a 30-amino-acid chain: Platelet factor 4 (30 aa).

Belongs to the intercrine alpha (chemokine CxC) family. In terms of assembly, homotetramer. Interacts with TNFAIP6 (via Link domain). Interacts with CCR1. Interacts with CXCR3. In terms of processing, binds non-covalently to a proteoglycan molecule.

The protein localises to the secreted. Chemokine released during platelet aggregation that plays a role in different biological processes including hematopoiesis, cell proliferation, differentiation, and activation. Acts via different functional receptors including CCR1, CXCR3A or CXCR3B. Upon interaction with CXCR3A receptor, induces activated T-lymphocytes migration mediated via downstream Ras/extracellular signal-regulated kinase (ERK) signaling. Neutralizes the anticoagulant effect of heparin by binding more strongly to heparin than to the chondroitin-4-sulfate chains of the carrier molecule. Plays a role in the inhibition of hematopoiesis and in the maintenance of hematopoietic stem cell (HSC) quiescence. Chemotactic for neutrophils and monocytes via CCR1. Inhibits endothelial cell proliferation. In cooperation with toll-like receptor 8/TLR8, induces chromatin remodeling and activates inflammatory gene expression via the TBK1-IRF5 axis. In addition, induces myofibroblast differentiation and collagen synthesis in different precursor cells, including endothelial cells, by stimulating endothelial-to-mesenchymal transition. The chain is Platelet factor 4 (PF4) from Oryctolagus cuniculus (Rabbit).